A 473-amino-acid polypeptide reads, in one-letter code: H(+)/Cl(-) exchange transporter ClcA (473 aa).

Residues 1–32 lie on the Cytoplasmic side of the membrane; that stretch reads MKTDTSTFLAQQIVRLRRRDQIRRLMQRDKTP. Residues 33–69 traverse the membrane as a helical segment; it reads LAILLMAAVVGTLTGLVGVAFEKAVSWVQNMRIGALV. Over 70 to 76 the chain is Periplasmic; it reads QVADHAF. Residues 77–100 form a helical membrane-spanning segment; sequence LLWPLAFILSALLAMVGYFLVRKF. The short motif at 106 to 110 is the Selectivity filter part_1 element; sequence GSGIP. Residue serine 107 coordinates chloride. The helical intramembrane region spans 109 to 116; the sequence is IPEIEGAL. The Cytoplasmic segment spans residues 117 to 123; it reads EELRPVR. The next 2 helical transmembrane spans lie at 124–141 and 148–166; these read WWRV…TLGA and EGPT…LDVF. A Selectivity filter part_2 motif is present at residues 146–150; that stretch reads GREGP. Over 167–176 the chain is Cytoplasmic; sequence RMRSAEARHT. 2 consecutive intramembrane regions (helical) follow at residues 177–189 and 193–201; these read LLAT…LSAA and PLAGILFII. Topologically, residues 202–214 are cytoplasmic; that stretch reads EEMRPQFRYNLIS. The chain crosses the membrane as a helical span at residues 215–232; the sequence is IKAVFTGVIMSSIVFRIF. At 233-252 the chain is on the periplasmic side; it reads NGEAPIIEVGKLSDAPVNTL. The chain crosses the membrane as a helical span at residues 253-281; the sequence is WLYLILGIIFGCVGPVFNSLVLRTQDMFQ. At 282–287 the chain is on the cytoplasmic side; that stretch reads RFHGGE. Residues 288–309 traverse the membrane as a helical segment; sequence IKKWVLMGGAIGGLCGILGLIE. Topologically, residues 310-329 are periplasmic; that stretch reads PEAAGGGFNLIPIAAAGNFS. 2 helical membrane passes run 330-349 and 355-376; these read VGLL…LCFS and GIFA…MAAA. Positions 355–359 match the Selectivity filter part_3 motif; sequence GIFAP. Positions 356 and 357 each coordinate chloride. Residues 377–386 are Periplasmic-facing; sequence VLFPQYHLEA. An intramembrane region (helical) is located at residues 387–401; sequence GTFAIAGMGALMAAS. The segment at residues 402 to 404 is an intramembrane region (note=Loop between two helices); the sequence is VRA. The segment at residues 405–416 is an intramembrane region (helical); that stretch reads PLTGIVLVLEMT. The note=Loop between two helices intramembrane region spans 417–421; the sequence is DNYQL. The helical transmembrane segment at 422-438 threads the bilayer; the sequence is ILPMIITCLGATLLAQF. Over 439 to 473 the chain is Cytoplasmic; the sequence is LGGKPLYSTILARTLAKQDAEQAAKNQNAPAGENT. Tyrosine 445 is a chloride binding site.

This sequence belongs to the chloride channel (TC 2.A.49) family. ClcA subfamily. As to quaternary structure, homodimer.

It localises to the cell inner membrane. It catalyses the reaction 2 chloride(in) + H(+)(out) = 2 chloride(out) + H(+)(in). Functionally, proton-coupled chloride transporter. Functions as antiport system and exchanges two chloride ions for 1 proton. Probably acts as an electrical shunt for an outwardly-directed proton pump that is linked to amino acid decarboxylation, as part of the extreme acid resistance (XAR) response. This Salmonella newport (strain SL254) protein is H(+)/Cl(-) exchange transporter ClcA.